Reading from the N-terminus, the 175-residue chain is Inorganic pyrophosphatase (175 aa).

3 residues coordinate substrate: Lys29, Arg43, and Tyr55. Positions 65, 70, and 102 each coordinate Mg(2+). Position 141 (Tyr141) interacts with substrate.

This sequence belongs to the PPase family. As to quaternary structure, homohexamer. The cofactor is Mg(2+).

The protein localises to the cytoplasm. It carries out the reaction diphosphate + H2O = 2 phosphate + H(+). Functionally, catalyzes the hydrolysis of inorganic pyrophosphate (PPi) forming two phosphate ions. The chain is Inorganic pyrophosphatase from Rickettsia bellii (strain RML369-C).